Reading from the N-terminus, the 45-residue chain is Scolopendra 20417.15 Da toxin (45 aa).

The disordered stretch occupies residues 26-45 (KVANGQEAGQPGAXNMKELH).

The protein belongs to the CRISP family. Venom allergen 5-like subfamily. Post-translationally, contains 3 disulfide bonds. Expressed by the venom gland.

The protein localises to the secreted. The chain is Scolopendra 20417.15 Da toxin from Scolopendra viridicornis nigra (Brazilian giant centipede).